The primary structure comprises 448 residues: Phosphoglucosamine mutase (448 aa).

Residue serine 100 is the Phosphoserine intermediate of the active site. Residues serine 100, aspartate 240, aspartate 242, and aspartate 244 each contribute to the Mg(2+) site. Serine 100 is modified (phosphoserine).

It belongs to the phosphohexose mutase family. It depends on Mg(2+) as a cofactor. Activated by phosphorylation.

The catalysed reaction is alpha-D-glucosamine 1-phosphate = D-glucosamine 6-phosphate. Functionally, catalyzes the conversion of glucosamine-6-phosphate to glucosamine-1-phosphate. The chain is Phosphoglucosamine mutase from Bacillus cereus (strain B4264).